We begin with the raw amino-acid sequence, 396 residues long: NADH-quinone oxidoreductase subunit D (396 aa).

This sequence belongs to the complex I 49 kDa subunit family. NDH-1 is composed of 14 different subunits. Subunits NuoB, C, D, E, F, and G constitute the peripheral sector of the complex.

The protein resides in the cell inner membrane. It carries out the reaction a quinone + NADH + 5 H(+)(in) = a quinol + NAD(+) + 4 H(+)(out). Its function is as follows. NDH-1 shuttles electrons from NADH, via FMN and iron-sulfur (Fe-S) centers, to quinones in the respiratory chain. The immediate electron acceptor for the enzyme in this species is believed to be ubiquinone. Couples the redox reaction to proton translocation (for every two electrons transferred, four hydrogen ions are translocated across the cytoplasmic membrane), and thus conserves the redox energy in a proton gradient. In Agrobacterium fabrum (strain C58 / ATCC 33970) (Agrobacterium tumefaciens (strain C58)), this protein is NADH-quinone oxidoreductase subunit D.